We begin with the raw amino-acid sequence, 520 residues long: Arabinose import ATP-binding protein AraG (520 aa).

Over residues Met1–Ser10 the composition is skewed to polar residues. The segment at Met1–Gly27 is disordered. 2 ABC transporter domains span residues Leu30–Arg265 and Arg265–Leu516. Gly62 to Ser69 serves as a coordination point for ATP.

The protein belongs to the ABC transporter superfamily. Arabinose importer (TC 3.A.1.2.2) family. The complex is composed of two ATP-binding proteins (AraG), two transmembrane proteins (AraH) and a solute-binding protein (AraF).

The protein resides in the cell inner membrane. The enzyme catalyses L-arabinose(out) + ATP + H2O = L-arabinose(in) + ADP + phosphate + H(+). Its function is as follows. Part of the ABC transporter complex AraFGH involved in L-arabinose import. Responsible for energy coupling to the transport system. The chain is Arabinose import ATP-binding protein AraG from Azospirillum brasilense.